Consider the following 375-residue polypeptide: Glutamate 5-kinase (375 aa).

K13 is a binding site for ATP. 3 residues coordinate substrate: S54, D141, and N153. ATP-binding positions include 173-174 (TD) and 216-222 (TGGMATK). One can recognise a PUA domain in the interval 281-359 (TGKIFIDAGA…EAIAAVLGYV (79 aa)).

It belongs to the glutamate 5-kinase family.

It is found in the cytoplasm. It carries out the reaction L-glutamate + ATP = L-glutamyl 5-phosphate + ADP. The protein operates within amino-acid biosynthesis; L-proline biosynthesis; L-glutamate 5-semialdehyde from L-glutamate: step 1/2. Functionally, catalyzes the transfer of a phosphate group to glutamate to form L-glutamate 5-phosphate. The protein is Glutamate 5-kinase of Synechocystis sp. (strain ATCC 27184 / PCC 6803 / Kazusa).